The sequence spans 1402 residues: DNA-directed RNA polymerase subunit beta' (1402 aa).

Cys-70, Cys-72, Cys-85, and Cys-88 together coordinate Zn(2+). 3 residues coordinate Mg(2+): Asp-460, Asp-462, and Asp-464. Zn(2+)-binding residues include Cys-812, Cys-886, Cys-893, and Cys-896. Positions 1373 to 1402 (DRFLNGSASSNEKSRSAGVLEATDEESAGD) are disordered.

It belongs to the RNA polymerase beta' chain family. As to quaternary structure, the RNAP catalytic core consists of 2 alpha, 1 beta, 1 beta' and 1 omega subunit. When a sigma factor is associated with the core the holoenzyme is formed, which can initiate transcription. It depends on Mg(2+) as a cofactor. Zn(2+) serves as cofactor.

The catalysed reaction is RNA(n) + a ribonucleoside 5'-triphosphate = RNA(n+1) + diphosphate. Functionally, DNA-dependent RNA polymerase catalyzes the transcription of DNA into RNA using the four ribonucleoside triphosphates as substrates. This Dichelobacter nodosus (strain VCS1703A) protein is DNA-directed RNA polymerase subunit beta'.